The following is a 237-amino-acid chain: Leucyl/phenylalanyl-tRNA--protein transferase (237 aa).

It belongs to the L/F-transferase family.

It localises to the cytoplasm. It carries out the reaction N-terminal L-lysyl-[protein] + L-leucyl-tRNA(Leu) = N-terminal L-leucyl-L-lysyl-[protein] + tRNA(Leu) + H(+). It catalyses the reaction N-terminal L-arginyl-[protein] + L-leucyl-tRNA(Leu) = N-terminal L-leucyl-L-arginyl-[protein] + tRNA(Leu) + H(+). The catalysed reaction is L-phenylalanyl-tRNA(Phe) + an N-terminal L-alpha-aminoacyl-[protein] = an N-terminal L-phenylalanyl-L-alpha-aminoacyl-[protein] + tRNA(Phe). Functionally, functions in the N-end rule pathway of protein degradation where it conjugates Leu, Phe and, less efficiently, Met from aminoacyl-tRNAs to the N-termini of proteins containing an N-terminal arginine or lysine. The chain is Leucyl/phenylalanyl-tRNA--protein transferase from Shewanella baltica (strain OS195).